Here is a 191-residue protein sequence, read N- to C-terminus: MKEIVLASSSPRRRDLLKQLGLTFRIMTAGVDETPPGGLTPAEMVEVLAGRKAAAVAGMLEDALVIGADTVVVLNGRVLGKPADREEAAGMLRQLQGTDHTVYTGVAVMDAASKKMQVAHEKTRVFFKSLDEHEIRRYVATGEPMGKAGAYAVQGRAAAFIKGLEGCYTNVVGLPLARLADMLKKFGYNVL.

Asp69 (proton acceptor) is an active-site residue.

It belongs to the Maf family. YhdE subfamily. It depends on a divalent metal cation as a cofactor.

The protein resides in the cytoplasm. It catalyses the reaction dTTP + H2O = dTMP + diphosphate + H(+). The enzyme catalyses UTP + H2O = UMP + diphosphate + H(+). Its function is as follows. Nucleoside triphosphate pyrophosphatase that hydrolyzes dTTP and UTP. May have a dual role in cell division arrest and in preventing the incorporation of modified nucleotides into cellular nucleic acids. The sequence is that of dTTP/UTP pyrophosphatase from Pelotomaculum thermopropionicum (strain DSM 13744 / JCM 10971 / SI).